Here is a 230-residue protein sequence, read N- to C-terminus: Large ribosomal subunit protein uL1 (230 aa).

It belongs to the universal ribosomal protein uL1 family. Part of the 50S ribosomal subunit.

In terms of biological role, binds directly to 23S rRNA. The L1 stalk is quite mobile in the ribosome, and is involved in E site tRNA release. Its function is as follows. Protein L1 is also a translational repressor protein, it controls the translation of the L11 operon by binding to its mRNA. The chain is Large ribosomal subunit protein uL1 from Desulfitobacterium hafniense (strain DSM 10664 / DCB-2).